A 333-amino-acid polypeptide reads, in one-letter code: Probable cytosolic iron-sulfur protein assembly protein ciao1-B (333 aa).

WD repeat units lie at residues 14-53 (HPDS…WECK), 59-98 (GHQR…FECL), 103-142 (GHEN…EYEC), 148-187 (SHTQ…WECR), 192-231 (GHTS…GGQE), 246-285 (FHGR…DPDQ), and 297-333 (AHTQ…QSGV).

Belongs to the WD repeat CIA1 family. In terms of assembly, component of the CIA complex.

Its function is as follows. Key component of the cytosolic iron-sulfur protein assembly (CIA) complex, a multiprotein complex that mediates the incorporation of iron-sulfur cluster into extramitochondrial Fe/S proteins. The protein is Probable cytosolic iron-sulfur protein assembly protein ciao1-B (ciao1b) of Salmo salar (Atlantic salmon).